The chain runs to 181 residues: TATA-box-binding protein (181 aa).

Repeat copies occupy residues 7 to 83 and 98 to 173.

This sequence belongs to the TBP family.

General factor that plays a role in the activation of archaeal genes transcribed by RNA polymerase. Binds specifically to the TATA box promoter element which lies close to the position of transcription initiation. The sequence is that of TATA-box-binding protein from Methanococcus aeolicus (strain ATCC BAA-1280 / DSM 17508 / OCM 812 / Nankai-3).